We begin with the raw amino-acid sequence, 671 residues long: Leucine aminopeptidase 2 (671 aa).

Residues 184-186 (QLE) and 311-316 (PYGGME) each bind substrate. His-340 contacts Zn(2+). Glu-341 acts as the Proton acceptor in catalysis. The Zn(2+) site is built by His-344 and Glu-363. Catalysis depends on Tyr-429, which acts as the Proton donor.

It belongs to the peptidase M1 family. Requires Zn(2+) as cofactor.

Its subcellular location is the cytoplasm. It is found in the nucleus. It carries out the reaction an epoxide + H2O = an ethanediol. Its activity is regulated as follows. Inhibited by 3-(4-benzyloxyphenyl)-2-(R)-amino-1-propanethiol (thioamine) and N-hydroxy-N-(2-(S)-amino-3-(4-benzyloxyphenyl)propyl)-5-carboxypen-tanamide (hydroxamic acid). The aminopeptidase activity is stimulated by LTA(4). In terms of biological role, aminopeptidase that preferentially cleaves di- and tripeptides. Also has low epoxide hydrolase activity (in vitro). Can hydrolyze the epoxide leukotriene LTA(4) but it forms preferentially 5,6-dihydroxy-7,9,11,14-eicosatetraenoic acid rather than the cytokine leukotriene B(4) as the product compared to the homologous mammalian enzyme (in vitro). The chain is Leucine aminopeptidase 2 from Saccharomyces cerevisiae (strain YJM789) (Baker's yeast).